Consider the following 308-residue polypeptide: Ribosomal RNA large subunit methyltransferase F (308 aa).

The protein belongs to the methyltransferase superfamily. METTL16/RlmF family.

The protein resides in the cytoplasm. The enzyme catalyses adenosine(1618) in 23S rRNA + S-adenosyl-L-methionine = N(6)-methyladenosine(1618) in 23S rRNA + S-adenosyl-L-homocysteine + H(+). Functionally, specifically methylates the adenine in position 1618 of 23S rRNA. The polypeptide is Ribosomal RNA large subunit methyltransferase F (Shigella dysenteriae serotype 1 (strain Sd197)).